The following is a 295-amino-acid chain: ATP synthase gamma chain (295 aa).

The protein belongs to the ATPase gamma chain family. As to quaternary structure, F-type ATPases have 2 components, CF(1) - the catalytic core - and CF(0) - the membrane proton channel. CF(1) has five subunits: alpha(3), beta(3), gamma(1), delta(1), epsilon(1). CF(0) has three main subunits: a, b and c.

The protein localises to the cell inner membrane. Functionally, produces ATP from ADP in the presence of a proton gradient across the membrane. The gamma chain is believed to be important in regulating ATPase activity and the flow of protons through the CF(0) complex. The protein is ATP synthase gamma chain of Bdellovibrio bacteriovorus (strain ATCC 15356 / DSM 50701 / NCIMB 9529 / HD100).